Reading from the N-terminus, the 163-residue chain is Large ribosomal subunit protein uL10 (163 aa).

It belongs to the universal ribosomal protein uL10 family. In terms of assembly, part of the ribosomal stalk of the 50S ribosomal subunit. The N-terminus interacts with L11 and the large rRNA to form the base of the stalk. The C-terminus forms an elongated spine to which L12 dimers bind in a sequential fashion forming a multimeric L10(L12)X complex.

Forms part of the ribosomal stalk, playing a central role in the interaction of the ribosome with GTP-bound translation factors. This Haemophilus influenzae (strain ATCC 51907 / DSM 11121 / KW20 / Rd) protein is Large ribosomal subunit protein uL10 (rplJ).